The chain runs to 130 residues: Small ribosomal subunit protein uS11 (130 aa).

This sequence belongs to the universal ribosomal protein uS11 family. As to quaternary structure, part of the 30S ribosomal subunit. Interacts with proteins S7 and S18. Binds to IF-3.

Located on the platform of the 30S subunit, it bridges several disparate RNA helices of the 16S rRNA. Forms part of the Shine-Dalgarno cleft in the 70S ribosome. This Tropheryma whipplei (strain TW08/27) (Whipple's bacillus) protein is Small ribosomal subunit protein uS11.